Here is a 516-residue protein sequence, read N- to C-terminus: L-amino acid oxidase bordonein-L (516 aa).

A signal peptide spans 1 to 18 (MNVFFMFSLLFLAALGSC). C28 and C189 are oxidised to a cystine. Residues 61-62 (MA), 81-82 (EA), R89, and 103-106 (GPMR) each bind FAD. The substrate site is built by R106 and H239. V279 is a binding site for FAD. The cysteines at positions 349 and 430 are disulfide-linked. The N-linked (GlcNAc...) asparagine glycan is linked to N379. Y390 provides a ligand contact to substrate. FAD-binding positions include E475 and 482 to 487 (GWIDST). Residue 482 to 483 (GW) coordinates substrate.

As to quaternary structure, homodimer; non-covalently linked. The cofactor is FAD. In terms of processing, N-glycosylated. N-glycan probably consists of the disaccharide N-acetylglucosamine-fucose (HexNAc-Fuc). As to expression, expressed by the venom gland.

The protein resides in the secreted. It catalyses the reaction an L-alpha-amino acid + O2 + H2O = a 2-oxocarboxylate + H2O2 + NH4(+). The catalysed reaction is L-leucine + O2 + H2O = 4-methyl-2-oxopentanoate + H2O2 + NH4(+). It carries out the reaction L-phenylalanine + O2 + H2O = 3-phenylpyruvate + H2O2 + NH4(+). The enzyme catalyses L-tryptophan + O2 + H2O = indole-3-pyruvate + H2O2 + NH4(+). It catalyses the reaction L-methionine + O2 + H2O = 4-methylsulfanyl-2-oxobutanoate + H2O2 + NH4(+). The catalysed reaction is L-isoleucine + O2 + H2O = (S)-3-methyl-2-oxopentanoate + H2O2 + NH4(+). It carries out the reaction L-arginine + O2 + H2O = 5-guanidino-2-oxopentanoate + H2O2 + NH4(+). The enzyme catalyses L-histidine + O2 + H2O = 3-(imidazol-5-yl)pyruvate + H2O2 + NH4(+). In terms of biological role, catalyzes an oxidative deamination of predominantly hydrophobic and aromatic L-amino acids, thus producing hydrogen peroxide that may contribute to the diverse toxic effects of this enzyme. Is highly active on L-Met, L-Leu, L-Trp, and L-Phe, moderately active on L-Ile, L-His, and L-Arg, and weakly or not active on L-Gln, L-Val, L-Asn, L-Ala, L-Lys, L-Ser, L-Thr, L-Pro, L-Asp, L-Gly, L-Tyr, L-Cys and L-Glu. This enzyme exhibits diverse biological activities, such as hemorrhage, hemolysis, edema, apoptosis of vascular endothelial cells or tumor cell lines, antibacterial and antiparasitic activities, as well as regulation of platelet aggregation. Its effect on platelets is controversial, since it either induces aggregation or inhibits agonist-induced aggregation. These different effects are probably due to different experimental conditions. In vitro, the enzyme exhibits cytotoxicity against fibroblast cell line and kills Leishmania amazonensis promastigotes, intensified by substrate addition. The sequence is that of L-amino acid oxidase bordonein-L from Crotalus durissus terrificus (South American rattlesnake).